The sequence spans 350 residues: UDP-N-acetylenolpyruvoylglucosamine reductase (350 aa).

Residues 25–194 enclose the FAD-binding PCMH-type domain; the sequence is VGPVARRLIT…LDVGGRSAPL (170 aa). The active site involves Arg-166. Residue Ser-243 is the Proton donor of the active site. Glu-342 is a catalytic residue.

Belongs to the MurB family. FAD is required as a cofactor.

It is found in the cytoplasm. The catalysed reaction is UDP-N-acetyl-alpha-D-muramate + NADP(+) = UDP-N-acetyl-3-O-(1-carboxyvinyl)-alpha-D-glucosamine + NADPH + H(+). It functions in the pathway cell wall biogenesis; peptidoglycan biosynthesis. Functionally, cell wall formation. This Mycobacterium sp. (strain MCS) protein is UDP-N-acetylenolpyruvoylglucosamine reductase.